The primary structure comprises 91 residues: Methanol dehydrogenase [cytochrome c] subunit 2 (91 aa).

The N-terminal stretch at methionine 1–alanine 22 is a signal peptide. Cysteine 28 and cysteine 34 are disulfide-bonded.

The protein belongs to the methanol dehydrogenase subunit 2 family. In terms of assembly, heterotetramer composed of 2 alpha and 2 beta subunits.

The protein resides in the cell inner membrane. It catalyses the reaction 2 Fe(III)-[cytochrome cL] + a primary alcohol = 2 Fe(II)-[cytochrome cL] + an aldehyde + 2 H(+). In terms of biological role, catalyzes the oxidation of primary alcohols including methanol. This Methylophilus methylotrophus (Bacterium W3A1) protein is Methanol dehydrogenase [cytochrome c] subunit 2 (moxI).